A 514-amino-acid chain; its full sequence is MSEHKKPLVLMILDGWGYREDEQSNAILAANTPVLDELWATRPRTLISASGFDVGLPDGQMGNSEVGHVNLGAGRVVYQDFTRITKAINDGEFDSTPALVDNIDKAVSADKAVHIMGLLSPGGVHSHEDHIVASIELAAKRGAKEVYFHGFLDGRDTPPRSAKASIERIEAVFAKLQCGRLASLIGRYYAMDRDNRWNRVEKAYNLLTLAQGDFSYPTGVSALEAAYERDENDEFVAASTITPAGAEPVQINDGDTVIFANFRADRAREITRAFVEPNFDGFAKQKSPALSAFVMMTEYAADIDAPVAFGPTPLVNVLGEWFEKHGKTQLRISETEKYAHVTFFFSGGREDEFNGETRELIPSPQVATYDLQPEMNSEMLTDKLVAAIKSGKYDAIICNYPNGDMVGHSGVFAAAVKACEAVDHCIGRVVAALNKYGGEALITADHGNAEQMANLKTGQAHTAHTSEPVPFIYVGRDATASEGKALSDVAPTMLHLMGMEQPTEMTGKPIMTLK.

Positions 14 and 64 each coordinate Mn(2+). The active-site Phosphoserine intermediate is Ser64. Residues His125, 155 to 156 (RD), Arg187, Arg193, 263 to 266 (RADR), and Lys337 contribute to the substrate site. The Mn(2+) site is built by Asp404, His408, Asp445, His446, and His464.

This sequence belongs to the BPG-independent phosphoglycerate mutase family. Monomer. The cofactor is Mn(2+).

It catalyses the reaction (2R)-2-phosphoglycerate = (2R)-3-phosphoglycerate. It participates in carbohydrate degradation; glycolysis; pyruvate from D-glyceraldehyde 3-phosphate: step 3/5. Its function is as follows. Catalyzes the interconversion of 2-phosphoglycerate and 3-phosphoglycerate. This chain is 2,3-bisphosphoglycerate-independent phosphoglycerate mutase, found in Pseudoalteromonas translucida (strain TAC 125).